The sequence spans 253 residues: Phosphoadenosine 5'-phosphosulfate reductase (253 aa).

Cysteine 239 (nucleophile; cysteine thiosulfonate intermediate) is an active-site residue.

Belongs to the PAPS reductase family. CysH subfamily.

The protein resides in the cytoplasm. It carries out the reaction [thioredoxin]-disulfide + sulfite + adenosine 3',5'-bisphosphate + 2 H(+) = [thioredoxin]-dithiol + 3'-phosphoadenylyl sulfate. Its pathway is sulfur metabolism; hydrogen sulfide biosynthesis; sulfite from sulfate: step 3/3. Functionally, catalyzes the formation of sulfite from phosphoadenosine 5'-phosphosulfate (PAPS) using thioredoxin as an electron donor. The chain is Phosphoadenosine 5'-phosphosulfate reductase from Aliivibrio fischeri (strain ATCC 700601 / ES114) (Vibrio fischeri).